The primary structure comprises 335 residues: uncharacterized protein (335 aa).

Solcar repeat units follow at residues 22–129 (VKPI…LLPL), 134–227 (GFPA…IRLF), and 244–327 (KDLY…TKKY). The next 6 helical transmembrane spans lie at 28 to 48 (MLSA…LDVV), 104 to 123 (GLVP…FLGY), 133 to 154 (WGFP…ATIV), 195 to 219 (GILN…FYWW), 246 to 263 (LYIN…ATLL), and 307 to 323 (CVKV…SYHL).

Belongs to the mitochondrial carrier (TC 2.A.29) family.

It is found in the mitochondrion inner membrane. This is an uncharacterized protein from Schizosaccharomyces pombe (strain 972 / ATCC 24843) (Fission yeast).